Consider the following 101-residue polypeptide: Small ribosomal subunit protein bS18c (101 aa).

Belongs to the bacterial ribosomal protein bS18 family. In terms of assembly, part of the 30S ribosomal subunit.

It localises to the plastid. Its subcellular location is the chloroplast. This chain is Small ribosomal subunit protein bS18c, found in Eucalyptus globulus subsp. globulus (Tasmanian blue gum).